A 64-amino-acid polypeptide reads, in one-letter code: H/ACA ribonucleoprotein complex subunit 3 (64 aa).

It belongs to the NOP10 family. Component of the box H/ACA small nucleolar ribonucleoprotein (H/ACA snoRNP) complex consisting of Nop60B, Gar1, NPH2 and Nop10, and associated with H/ACA-type snoRNAs.

It localises to the nucleus. The protein localises to the nucleolus. Functionally, component of the box H/ACA small nucleolar ribonucleoprotein (H/ACA snoRNP) complex, which catalyzes pseudouridylation of rRNA. This involves the isomerization of uridine such that the ribose is subsequently attached to C5, instead of the normal N1. Pseudouridine ('psi') residues may serve to stabilize the conformation of rRNAs. Required for ribosome biogenesis. H/ACA snoRNP complex-dependent ribosome biogenesis is important in female germline cell differentiation during oogenesis. The protein is H/ACA ribonucleoprotein complex subunit 3 of Drosophila melanogaster (Fruit fly).